The sequence spans 423 residues: Deferrochelatase (423 aa).

The segment at residues 1–35 (MQYEDENGVNEPSRRRLLKGIGALALAGSCPVAHA) is a signal peptide (tat-type signal). Heme b contacts are provided by residues 236 to 238 (GTA), His329, 334 to 336 (NPR), and Arg347.

This sequence belongs to the DyP-type peroxidase family. EfeB subfamily. As to quaternary structure, homodimer. Part of a ferrous iron transporter composed of EfeU, EfeO and EfeB. The cofactor is heme b. In terms of processing, predicted to be exported by the Tat system. The position of the signal peptide cleavage has not been experimentally proven.

It is found in the periplasm. It carries out the reaction heme b + 2 H(+) = protoporphyrin IX + Fe(2+). Involved in the recovery of exogenous heme iron. Extracts iron from heme while preserving the protoporphyrin ring intact. This Escherichia coli O6:H1 (strain CFT073 / ATCC 700928 / UPEC) protein is Deferrochelatase (efeB).